Consider the following 683-residue polypeptide: Dynein, 78 kDa intermediate chain, flagellar outer arm (683 aa).

The segment at 1 to 42 is disordered; the sequence is MPALSPAKKGTDKGKTGKKTGKQEQNAQDYIPPPPPMPGDEA. 4 WD repeats span residues 358 to 398, 407 to 450, 562 to 602, and 608 to 647; these read HTES…DEPI, KLND…LIPE, DLND…LLPL, and VKKA…RITS.

This sequence belongs to the dynein intermediate chain family. In terms of assembly, consists of at least 3 heavy chains (alpha, beta and gamma), 2 intermediate chains and 8 light chains.

It localises to the cytoplasm. The protein resides in the cytoskeleton. It is found in the flagellum axoneme. Is essential for arm assembly or attachment to the outer doublet microtubule. The chain is Dynein, 78 kDa intermediate chain, flagellar outer arm (ODA9) from Chlamydomonas reinhardtii (Chlamydomonas smithii).